We begin with the raw amino-acid sequence, 953 residues long: 26S proteasome non-ATPase regulatory subunit 1 (953 aa).

N-acetylmethionine; partial is present on methionine 1. Threonine 273 carries the post-translational modification Phosphothreonine. Residues 279–318 are disordered; it reads PGSTNTGTVPGSEKDSDSMETEEKTGSAFVGKTPEASPEP. Residue serine 290 is modified to Phosphoserine. A compositionally biased stretch (basic and acidic residues) spans 290-303; that stretch reads SEKDSDSMETEEKT. N6-acetyllysine is present on lysine 310. Threonine 311 is subject to Phosphothreonine. The residue at position 315 (serine 315) is a Phosphoserine. PC repeat units follow at residues 403–436, 441–474, 476–510, 511–545, 547–580, 581–616, 617–649, 651–685, 686–726, and 729–761; these read TATASLGVIHKGHEKEALQLMATYLPKDTSPGSA, GGLYALGLIHANHGGDIIDYLLNQLKNASNDIVR, GGSLGLGLAAMGTARQDVYDLLKTNLYQDDAVTGE, AAGLALGLVMLGSKNAQAIEDMVGYAQETQHEKIL, GLAVGIALVMYGRMEEADALIESLCRDKDPILRR, SGMYTVAMAYCGSGNNKAIRRLLHVAVSDVNDDVRR, AAVESLGFILFRTPEQCPSVVSLLSESYNPHVR, GAAMALGICCAGTGNKEAINLLEPMTNDPVNYVRQ, GALI…DVMA, and GAILAQGILDAGGHNVTISLQSRTGHTHMPSVV. Lysine 720 carries the N6-acetyllysine modification. The residue at position 830 (threonine 830) is a Phosphothreonine. Serine 834 carries the phosphoserine modification. 2 disordered regions span residues 839-881 and 930-953; these read AKKK…LDNP and AHGPKIEEEEQEPEPPEPFEYIDD. Basic and acidic residues-rich tracts occupy residues 842-852 and 859-872; these read KEKEKEKKEEE and AEKKEEKEKKKEPE. Positions 936-953 are enriched in acidic residues; it reads EEEEQEPEPPEPFEYIDD.

It belongs to the proteasome subunit S1 family. In terms of assembly, component of the 19S proteasome regulatory particle complex. The 26S proteasome consists of a 20S core particle (CP) and two 19S regulatory subunits (RP). The regulatory particle is made of a lid composed of 9 subunits, a base containing 6 ATPases and few additional components including PSMD1. Interacts with ADRM1. Interacts with ZFAND1.

Its function is as follows. Component of the 26S proteasome, a multiprotein complex involved in the ATP-dependent degradation of ubiquitinated proteins. This complex plays a key role in the maintenance of protein homeostasis by removing misfolded or damaged proteins, which could impair cellular functions, and by removing proteins whose functions are no longer required. Therefore, the proteasome participates in numerous cellular processes, including cell cycle progression, apoptosis, or DNA damage repair. This chain is 26S proteasome non-ATPase regulatory subunit 1 (PSMD1), found in Pongo abelii (Sumatran orangutan).